Reading from the N-terminus, the 130-residue chain is MSAAGVRSTRQRAAISTLLETLDDFRSAQELHDELRRRGENIGLTTVYRTLQSMASSGLVDTLHTDTGESVYRRCSEHHHHHLVCRSCGSTIEVGDHEVEAWAAEVATKHGFSDVSHTIEIFGTCSDCRS.

Zn(2+) contacts are provided by Asp-61, Cys-75, His-79, His-80, His-81, His-82, Cys-85, Cys-88, Glu-100, His-117, Cys-125, and Cys-128.

It belongs to the Fur family. Homodimer. Zn(2+) is required as a cofactor.

The protein localises to the cytoplasm. In terms of biological role, global transcriptional regulator involved in zinc homeostasis. In Mycobacterium tuberculosis (strain CDC 1551 / Oshkosh), this protein is Zinc uptake regulation protein (zur).